The primary structure comprises 225 residues: Superoxide dismutase [Mn], mitochondrial (225 aa).

Residues 1–27 constitute a mitochondrion transit peptide; that stretch reads MITAITRTALPRATLRTSLATMSTIRA. H53, H101, D187, and H191 together coordinate Mn(2+).

This sequence belongs to the iron/manganese superoxide dismutase family. Requires Mn(2+) as cofactor.

Its subcellular location is the mitochondrion. The protein localises to the cytoplasm. The catalysed reaction is 2 superoxide + 2 H(+) = H2O2 + O2. Destroys radicals which are normally produced within the cells and which are toxic to biological systems. In terms of biological role, destroys mitochondrial radicals produced by oxidative stress. Functionally, destroys cytoplasmic radicals produced in low copper environments; a condition which inactivates the cytoplasmic copper-dependent superoxide dismutase SOD1. This is Superoxide dismutase [Mn], mitochondrial from Cryptococcus neoformans var. grubii serotype A (strain H99 / ATCC 208821 / CBS 10515 / FGSC 9487) (Filobasidiella neoformans var. grubii).